A 2360-amino-acid chain; its full sequence is Nucleoprotein TPR (2360 aa).

The residue at position 2 (alanine 2) is an N-acetylalanine. Residues 3–13 (AVLQQVLERPE) form a sufficient for interaction with TPR region. Residues 14–117 (LNKLPKSTQN…GIQSQFTRAK (104 aa)) are necessary for interaction with HSF1. A coiled-coil region spans residues 24–370 (KLEKFLAEQQ…SATKRKGAIL (347 aa)). Residues lysine 252, lysine 312, and lysine 345 each carry the N6-acetyllysine modification. Serine 379 is subject to Phosphoserine. Residues 423–603 (LDEIVKEVEA…RESRQHQMQL (181 aa)) adopt a coiled-coil conformation. N6-acetyllysine is present on residues lysine 428, lysine 457, and lysine 477. A necessary for association to the NPC region spans residues 437 to 513 (LKRQREEYER…LMELEEARGN (77 aa)). A phosphoserine mark is found at serine 522, serine 523, and serine 632. The stretch at 664-1172 (ETIEAKAALK…IEKLSDKVVT (509 aa)) forms a coiled coil. Residues lysine 713, lysine 723, lysine 748, and lysine 755 each carry the N6-acetyllysine modification. Over residues 915–924 (LASQSTQRTG) the composition is skewed to polar residues. The interval 915 to 939 (LASQSTQRTGKGQPGDRDDVDDLKS) is disordered. Residues 928–939 (PGDRDDVDDLKS) are compositionally biased toward basic and acidic residues. Phosphoserine occurs at positions 1180 and 1185. 2 coiled-coil regions span residues 1215-1420 (EVAQ…LDAK) and 1472-1629 (VQEM…QRDE). Residues 1218-1320 (QVESLRYRQR…NAELSEKSGM (103 aa)) are necessary for interaction with HSF1. 2 disordered regions span residues 1479–1520 (KDNL…TAQL) and 1618–1673 (EHQE…PTPV). Basic and acidic residues-rich tracts occupy residues 1503-1512 (LSEKETEARS) and 1618-1630 (EHQE…RDEP). Positions 1632–1651 (EPTNKAPEQQRQITLKTTPA) are enriched in polar residues. An N6-acetyllysine modification is found at lysine 1689. Position 1691 is a phosphothreonine (threonine 1691). Residues 1801 to 1826 (QSSPVERPSTSTAVFGTVSATPSSSL) show a composition bias toward polar residues. Residues 1801-2122 (QSSPVERPST…TPGIGGMQQH (322 aa)) are disordered. Residues 1811–1866 (STAVFGTVSATPSSSLPKRAREEEEDSTIEAGDQVSDDTVEMPLPKKLKTVTPVGT) form a sufficient and essential for mediating its nuclear import region. The segment covering 1866–1880 (TEEEVMAEESTDGEA) has biased composition (acidic residues). The segment covering 1881-1892 (ETQTYNQDSQDS) has biased composition (polar residues). Phosphoserine is present on serine 1892. Over residues 1923–1934 (QSDQQTTSSQDG) the composition is skewed to low complexity. 2 stretches are compositionally biased toward acidic residues: residues 1945 to 1986 (DSDD…EDSN) and 1996 to 2017 (DGYE…ETEE). The segment covering 2023–2061 (ESNQRAADSQNSGEGNTSAAESSFSQEVAREQQPTSASE) has biased composition (polar residues). Phosphoserine is present on residues serine 2031, serine 2034, serine 2045, serine 2047, and serine 2070. An omega-N-methylarginine mark is found at arginine 2103 and arginine 2108. A phosphothreonine mark is found at threonine 2113 and threonine 2134. Serine 2152 bears the Phosphoserine mark. Omega-N-methylarginine is present on arginine 2160. Positions 2224–2241 (ESTTSDASEHASQSVPMV) are enriched in polar residues. The segment at 2224–2360 (ESTTSDASEH…RGGINRGNIN (137 aa)) is disordered. Residues 2242 to 2254 (TTSTGTLSTTNET) show a composition bias toward low complexity. Acidic residues-rich tracts occupy residues 2256–2269 (AGDD…ETES) and 2282–2296 (SQQE…DESD). Low complexity predominate over residues 2297-2317 (LPSTSQDPPSSSSVDTSSSQP). Arginine 2340, arginine 2342, and arginine 2351 each carry asymmetric dimethylarginine. A compositionally biased stretch (gly residues) spans 2349 to 2360 (GGRGGINRGNIN).

The protein belongs to the TPR family. In terms of assembly, homodimer. Part of the nuclear pore complex (NPC). Associates with the XPO1/CRM1-mediated nuclear export complex, the Importin alpha/Importin beta receptor and the dynein 1 complex. Interacts (via C-terminal domain) with the KPNB1; the interaction occurs in a RanGTP-dependent manner. Interacts (via C-terminal region and phosphorylated form) with MAPK1/ERK2 (via phosphorylated form); the interaction requires dimerization of MAPK1/ERK2 and increases following EGF stimulation. Interacts with MAPK3/ERK1; the interaction increases following EGF stimulation. Interacts (via coiled coil region) with NUP153; the interaction is direct. Interacts with HSF1; the interaction increases in a stress-responsive manner and stimulates export of stress-induced HSP70 mRNA. Interacts with huntingtin/HTT; the interaction is inhibited by aggregated huntingtin/HTT forms with expanded polyglutamine stretch. Interacts with MAD1L1 (via N-terminal region), MAD2L1, and TTK; the interactions occurs in a microtubule-independent manner. Interacts (via middle region) with DYNLL1. Interacts with DCTN1, dynein, NUP153 and tubulin. Interacts with IFI204 (via C-terminal region). Interacts with IFI203. Interacts with MTA1. Interacts with ZC3HC1; this interaction mediates ZC3HC1 nuclear envelopes (NE)-association but also required for proper positioning of a substantial amount of TPR at the nuclear basket (NB). Phosphorylated. Phosphorylation occurs on serine and threonine residues (comprised in the C-terminal region) by MAPK1/ERK2 and stabilizes the interaction between these two proteins.

It localises to the nucleus. It is found in the nucleus membrane. The protein resides in the nucleus envelope. Its subcellular location is the nuclear pore complex. The protein localises to the cytoplasm. It localises to the cytoskeleton. It is found in the spindle. The protein resides in the chromosome. Its subcellular location is the centromere. The protein localises to the kinetochore. Functionally, component of the nuclear pore complex (NPC), a complex required for the trafficking across the nuclear envelope. Functions as a scaffolding element in the nuclear phase of the NPC essential for normal nucleocytoplasmic transport of proteins and mRNAs, plays a role in the establishment of nuclear-peripheral chromatin compartmentalization in interphase, and in the mitotic spindle checkpoint signaling during mitosis. Involved in the quality control and retention of unspliced mRNAs in the nucleus; in association with NUP153, regulates the nuclear export of unspliced mRNA species bearing constitutive transport element (CTE) in a NXF1- and KHDRBS1-independent manner. Negatively regulates both the association of CTE-containing mRNA with large polyribosomes and translation initiation. Does not play any role in Rev response element (RRE)-mediated export of unspliced mRNAs. Implicated in nuclear export of mRNAs transcribed from heat shock gene promoters; associates both with chromatin in the HSP70 promoter and with mRNAs transcribed from this promoter under stress-induced conditions. Modulates the nucleocytoplasmic transport of activated MAPK1/ERK2 and huntingtin/HTT and may serve as a docking site for the XPO1/CRM1-mediated nuclear export complex. Also plays a role as a structural and functional element of the perinuclear chromatin distribution; involved in the formation and/or maintenance of NPC-associated perinuclear heterochromatin exclusion zones (HEZs). Finally, acts as a spatial regulator of the spindle-assembly checkpoint (SAC) response ensuring a timely and effective recruitment of spindle checkpoint proteins like MAD1L1 and MAD2L1 to unattached kinetochore during the metaphase-anaphase transition before chromosome congression. Its N-terminus is involved in activation of oncogenic kinases. Plays a role in the regulation of nuclear protein export. The chain is Nucleoprotein TPR from Rattus norvegicus (Rat).